An 81-amino-acid chain; its full sequence is Cytotoxin 2 (81 aa).

The first 21 residues, 1-21, serve as a signal peptide directing secretion; that stretch reads MKTLLLTLVVVTIVCLDLGYT. 4 cysteine pairs are disulfide-bonded: C24–C42, C35–C59, C63–C74, and C75–C80.

This sequence belongs to the three-finger toxin family. Short-chain subfamily. Type IA cytotoxin sub-subfamily. As to quaternary structure, monomer in solution; Homodimer and oligomer in the presence of negatively charged lipids forming a pore with a size ranging between 20 and 30 Angstroms. As to expression, expressed by the venom gland.

The protein resides in the secreted. Its subcellular location is the target cell membrane. Functionally, shows cytolytic activity on many different cells by forming pore in lipid membranes. In vivo, increases heart rate or kills the animal by cardiac arrest. In addition, it binds to heparin with high affinity, interacts with Kv channel-interacting protein 1 (KCNIP1) in a calcium-independent manner, and binds to integrin alpha-V/beta-3 (ITGAV/ITGB3) with moderate affinity. The chain is Cytotoxin 2 from Naja kaouthia (Monocled cobra).